A 327-amino-acid polypeptide reads, in one-letter code: Type II methyltransferase M.HhaI (327 aa).

In terms of domain architecture, SAM-dependent MTase C5-type spans 12 to 325 (LRFIDLFAGL…YNIGSSLNFK (314 aa)). Residue cysteine 81 is part of the active site.

This sequence belongs to the class I-like SAM-binding methyltransferase superfamily. C5-methyltransferase family. As to quaternary structure, monomer.

The enzyme catalyses a 2'-deoxycytidine in DNA + S-adenosyl-L-methionine = a 5-methyl-2'-deoxycytidine in DNA + S-adenosyl-L-homocysteine + H(+). Its function is as follows. A methylase, recognizes the double-stranded sequence 5'-GCGC-3', methylates C-2 on both strands, and protects the DNA from cleavage by the HhaI endonuclease. The chain is Type II methyltransferase M.HhaI (hhaIM) from Haemophilus parahaemolyticus.